Reading from the N-terminus, the 377-residue chain is uncharacterized protein (377 aa).

32–39 contacts ATP; sequence GPINSGKT.

This sequence belongs to the archaeal ATPase family.

This is an uncharacterized protein from Methanocaldococcus jannaschii (strain ATCC 43067 / DSM 2661 / JAL-1 / JCM 10045 / NBRC 100440) (Methanococcus jannaschii).